The primary structure comprises 357 residues: Alanine racemase, catabolic (357 aa).

Lys-33 (proton acceptor; specific for D-alanine) is an active-site residue. At Lys-33 the chain carries N6-(pyridoxal phosphate)lysine. Arg-129 serves as a coordination point for substrate. The active-site Proton acceptor; specific for L-alanine is the Tyr-253. Met-301 contacts substrate.

This sequence belongs to the alanine racemase family. The cofactor is pyridoxal 5'-phosphate.

It carries out the reaction L-alanine = D-alanine. It functions in the pathway amino-acid biosynthesis; D-alanine biosynthesis; D-alanine from L-alanine: step 1/1. In terms of biological role, isomerizes L-alanine to D-alanine which is then likely oxidized to pyruvate by DadA. Shows racemase activity with both alanine stereoisomers, negligible activity with D-cysteine and L-serine, and exhibits no activity with the remaining natural chiral amino acids. The polypeptide is Alanine racemase, catabolic (Pseudomonas putida (strain ATCC 47054 / DSM 6125 / CFBP 8728 / NCIMB 11950 / KT2440)).